Consider the following 134-residue polypeptide: Phosphoribosyl-AMP cyclohydrolase (134 aa).

A Mg(2+)-binding site is contributed by Asp-80. Cys-81 contacts Zn(2+). Asp-82 and Asp-84 together coordinate Mg(2+). Residues Cys-98 and Cys-105 each contribute to the Zn(2+) site.

Belongs to the PRA-CH family. Homodimer. It depends on Mg(2+) as a cofactor. Requires Zn(2+) as cofactor.

Its subcellular location is the cytoplasm. It carries out the reaction 1-(5-phospho-beta-D-ribosyl)-5'-AMP + H2O = 1-(5-phospho-beta-D-ribosyl)-5-[(5-phospho-beta-D-ribosylamino)methylideneamino]imidazole-4-carboxamide. The protein operates within amino-acid biosynthesis; L-histidine biosynthesis; L-histidine from 5-phospho-alpha-D-ribose 1-diphosphate: step 3/9. Functionally, catalyzes the hydrolysis of the adenine ring of phosphoribosyl-AMP. This chain is Phosphoribosyl-AMP cyclohydrolase, found in Bordetella avium (strain 197N).